The sequence spans 1427 residues: A disintegrin and metalloproteinase with thrombospondin motifs 13 (1427 aa).

Residues 1 to 29 (MHQRHPRARCPPLCVAGILACGFLLGCWG) form the signal peptide. A propeptide spanning residues 30 to 74 (PSHFQQSCLQALEPQAVSSYLSPGAPLKGRPPSPGFQRQRQRQRR) is cleaved from the precursor. The interval 51-70 (SPGAPLKGRPPSPGFQRQRQ) is disordered. The 207-residue stretch at 80 to 286 (LHLELLVAVG…GRARCVWDPP (207 aa)) folds into the Peptidase M12B domain. Glu83 lines the Ca(2+) pocket. Residues Asn142 and Asn146 are each glycosylated (N-linked (GlcNAc...) asparagine). Disulfide bonds link Cys155–Cys208, Cys202–Cys281, and Cys242–Cys265. Positions 173, 182, 184, 187, and 212 each coordinate Ca(2+). Residue His224 coordinates Zn(2+). Residue Glu225 is part of the active site. Zn(2+)-binding residues include His228 and His234. Cys281 and Asp284 together coordinate Ca(2+). Residues 287 to 383 (RPQPGSAGHP…LVELTPIAAV (97 aa)) form the Disintegrin domain. 4 disulfides stabilise this stretch: Cys311–Cys337, Cys322–Cys347, Cys332–Cys366, and Cys360–Cys371. The 56-residue stretch at 384 to 439 (HGRWSSWGPRSPCSRSCGGGVVTRRRQCNNPRPAFGGRACVGADLQAEMCNTQACE) folds into the TSP type-1 1 domain. C-linked (Man) tryptophan glycosylation is present at Trp387. 8 disulfides stabilise this stretch: Cys396–Cys433, Cys400–Cys438, Cys411–Cys423, Cys450–Cys487, Cys483–Cys522, Cys508–Cys527, Cys532–Cys548, and Cys545–Cys555. Ser399 carries O-linked (Fuc...) serine glycosylation. Residues 440–556 (KTQLEFMSQQ…VCGGDNSTCS (117 aa)) are cysteine-rich. Positions 498 to 500 (RGD) match the Cell attachment site motif. N-linked (GlcNAc...) asparagine glycans are attached at residues Asn552, Asn579, and Asn614. Residues 556–685 (SPRKGSFTAG…TYFQPKPRQA (130 aa)) form a spacer region. N-linked (GlcNAc...) (complex) asparagine glycosylation is present at Asn667. TSP type-1 domains lie at 682–730 (PRQA…SQQP), 742–805 (CPPY…QPCP), 808–859 (WEVS…PEPC), 896–950 (VWTP…QAVP), 951–1011 (CPAR…SLEP), 1012–1068 (CPPR…VPCL), and 1072–1131 (CTYR…GPCV). Ser698 carries an O-linked (Fuc...) serine glycan. Asn707 carries an N-linked (GlcNAc...) (complex) asparagine glycan. Ser757 is a glycosylation site (O-linked (Fuc...) serine). A glycan (N-linked (GlcNAc...) asparagine) is linked at Asn828. Residues Ser907, Ser965, Ser1027, and Ser1087 are each glycosylated (O-linked (Fuc...) serine). CUB domains lie at 1192 to 1298 (CGRQ…FYRE) and 1299 to 1427 (CDMQ…KEGT). N-linked (GlcNAc...) asparagine glycans are attached at residues Asn1235 and Asn1354.

The cofactor is Zn(2+). Ca(2+) is required as a cofactor. Post-translationally, glycosylated. O-fucosylated by POFUT2 on a serine or a threonine residue found within the consensus sequence C1-X(2)-(S/T)-C2-G of the TSP type-1 repeat domains where C1 and C2 are the first and second cysteine residue of the repeat, respectively. Fucosylated repeats can then be further glycosylated by the addition of a beta-1,3-glucose residue by the glucosyltransferase, B3GALTL. Fucosylation mediates the efficient secretion of ADAMTS13. May also be C-glycosylated on tryptophan residues within the consensus sequence W-X-X-W of the TPRs, and also N-glycosylated. These other glycosylations can also facilitate secretion. In terms of processing, the precursor is processed by a furin endopeptidase which cleaves off the pro-domain. Plasma. Expressed primarily in liver.

Its subcellular location is the secreted. The enzyme catalyses The enzyme cleaves the von Willebrand factor at bond 842-Tyr-|-Met-843 within the A2 domain.. With respect to regulation, zinc and calcium ions cooperatively modulate enzyme activity. The cleavage of the pro-domain is not required for protease activity. Dependence on calcium for proteolytic activity is mediated by the high affinity site. Functionally, cleaves the vWF multimers in plasma into smaller forms thereby controlling vWF-mediated platelet thrombus formation. In Homo sapiens (Human), this protein is A disintegrin and metalloproteinase with thrombospondin motifs 13 (ADAMTS13).